Reading from the N-terminus, the 101-residue chain is Phosphoribosyl-AMP cyclohydrolase (101 aa).

Residue D71 participates in Mg(2+) binding. C72 is a binding site for Zn(2+). D73 and D75 together coordinate Mg(2+). Residues C88 and C95 each contribute to the Zn(2+) site.

This sequence belongs to the PRA-CH family. Homodimer. Mg(2+) serves as cofactor. It depends on Zn(2+) as a cofactor.

It is found in the cytoplasm. The enzyme catalyses 1-(5-phospho-beta-D-ribosyl)-5'-AMP + H2O = 1-(5-phospho-beta-D-ribosyl)-5-[(5-phospho-beta-D-ribosylamino)methylideneamino]imidazole-4-carboxamide. Its pathway is amino-acid biosynthesis; L-histidine biosynthesis; L-histidine from 5-phospho-alpha-D-ribose 1-diphosphate: step 3/9. Functionally, catalyzes the hydrolysis of the adenine ring of phosphoribosyl-AMP. The protein is Phosphoribosyl-AMP cyclohydrolase of Bacillus cereus (strain AH187).